Here is a 499-residue protein sequence, read N- to C-terminus: Bifunctional purine biosynthesis protein PurH (499 aa).

The region spanning 1–144 (MINRALISVY…KNFKDVIVVT (144 aa)) is the MGS-like domain.

The protein belongs to the PurH family.

The catalysed reaction is (6R)-10-formyltetrahydrofolate + 5-amino-1-(5-phospho-beta-D-ribosyl)imidazole-4-carboxamide = 5-formamido-1-(5-phospho-D-ribosyl)imidazole-4-carboxamide + (6S)-5,6,7,8-tetrahydrofolate. It catalyses the reaction IMP + H2O = 5-formamido-1-(5-phospho-D-ribosyl)imidazole-4-carboxamide. It participates in purine metabolism; IMP biosynthesis via de novo pathway; 5-formamido-1-(5-phospho-D-ribosyl)imidazole-4-carboxamide from 5-amino-1-(5-phospho-D-ribosyl)imidazole-4-carboxamide (10-formyl THF route): step 1/1. The protein operates within purine metabolism; IMP biosynthesis via de novo pathway; IMP from 5-formamido-1-(5-phospho-D-ribosyl)imidazole-4-carboxamide: step 1/1. This is Bifunctional purine biosynthesis protein PurH from Clostridium kluyveri (strain NBRC 12016).